The sequence spans 264 residues: GTP cyclohydrolase FolE2 (264 aa).

It belongs to the GTP cyclohydrolase IV family.

The enzyme catalyses GTP + H2O = 7,8-dihydroneopterin 3'-triphosphate + formate + H(+). The protein operates within cofactor biosynthesis; 7,8-dihydroneopterin triphosphate biosynthesis; 7,8-dihydroneopterin triphosphate from GTP: step 1/1. Converts GTP to 7,8-dihydroneopterin triphosphate. The protein is GTP cyclohydrolase FolE2 of Nitratidesulfovibrio vulgaris (strain ATCC 29579 / DSM 644 / CCUG 34227 / NCIMB 8303 / VKM B-1760 / Hildenborough) (Desulfovibrio vulgaris).